Here is a 525-residue protein sequence, read N- to C-terminus: GMP synthase [glutamine-hydrolyzing] (525 aa).

The Glutamine amidotransferase type-1 domain occupies 9–207; that stretch reads RILILDFGSQ…VRDICQCEAL (199 aa). Residue Cys-86 is the Nucleophile of the active site. Catalysis depends on residues His-181 and Glu-183. A GMPS ATP-PPase domain is found at 208-400; the sequence is WTPAKIIDDA…LGLPYDMLYR (193 aa). ATP is bound at residue 235–241; the sequence is SGGVDSS.

As to quaternary structure, homodimer.

It catalyses the reaction XMP + L-glutamine + ATP + H2O = GMP + L-glutamate + AMP + diphosphate + 2 H(+). The protein operates within purine metabolism; GMP biosynthesis; GMP from XMP (L-Gln route): step 1/1. Its function is as follows. Catalyzes the synthesis of GMP from XMP. This is GMP synthase [glutamine-hydrolyzing] from Escherichia coli O8 (strain IAI1).